The primary structure comprises 810 residues: DNA gyrase subunit A (810 aa).

One can recognise a Topo IIA-type catalytic domain in the interval Leu-36–Leu-502. Tyr-124 serves as the catalytic O-(5'-phospho-DNA)-tyrosine intermediate. Residues Met-499–Lys-810 are C-terminal domain. A GyrA-box motif is present at residues Gln-529 to Gly-535.

It belongs to the type II topoisomerase GyrA/ParC subunit family. In terms of assembly, heterotetramer, composed of two GyrA and two GyrB chains. In the heterotetramer, GyrA contains the active site tyrosine that forms a transient covalent intermediate with DNA, while GyrB binds cofactors and catalyzes ATP hydrolysis.

It is found in the cytoplasm. It carries out the reaction ATP-dependent breakage, passage and rejoining of double-stranded DNA.. In terms of biological role, a type II topoisomerase that negatively supercoils closed circular double-stranded (ds) DNA in an ATP-dependent manner to modulate DNA topology and maintain chromosomes in an underwound state. Negative supercoiling favors strand separation, and DNA replication, transcription, recombination and repair, all of which involve strand separation. Also able to catalyze the interconversion of other topological isomers of dsDNA rings, including catenanes and knotted rings. Type II topoisomerases break and join 2 DNA strands simultaneously in an ATP-dependent manner. The sequence is that of DNA gyrase subunit A from Borreliella burgdorferi (strain ATCC 35210 / DSM 4680 / CIP 102532 / B31) (Borrelia burgdorferi).